Consider the following 369-residue polypeptide: Mycofactocin maturase MftC (369 aa).

In terms of domain architecture, Radical SAM core spans 16–232 (LDAPICLTWE…KGERVLTGDS (217 aa)). Positions 30, 34, 37, 251, 258, 269, 310, 313, 319, 323, and 341 each coordinate [4Fe-4S] cluster. The interval 347-369 (APALAQERHAPRPRVDHSRGSRE) is disordered. Residues 352-369 (QERHAPRPRVDHSRGSRE) show a composition bias toward basic and acidic residues.

Belongs to the radical SAM superfamily. MftC family. Interacts with MftB. [4Fe-4S] cluster is required as a cofactor.

It carries out the reaction [mycofactocin precursor peptide]-C-terminal glycyl-L-valyl-L-tyrosine + S-adenosyl-L-methionine = [mycofactocin precursor peptide]-C-terminal glycyl-N-{[2-(4-hydroxyphenyl)ethenyl]-3-methylbutanamide} + 5'-deoxyadenosine + L-methionine + CO2. It catalyses the reaction [mycofactocin precursor peptide]-C-terminal glycyl-N-{[2-(4-hydroxyphenyl)ethenyl]-3-methylbutanamide} + AH2 + S-adenosyl-L-methionine = [mycofactocin precursor peptide]-C-terminal glycyl-N-{5-[(4-hydroxyphenyl)methyl]-4,4-dimethyl-2-oxopyrrolidin-3-yl}acetamide + 5'-deoxyadenosine + L-methionine + A + H(+). Functionally, radical S-adenosylmethionine (SAM) enzyme responsible for the first step of the biosynthesis of the enzyme cofactor mycofactocin (MFT). Catalyzes two reactions at the C-terminus of the mycofactocin precursor (the MftA peptide). The first one is the oxidative decarboxylation of the C-terminal L-tyrosine of MftA, forming an unsaturated tyramine moiety. The second reaction is the cross-linking of the tyramine with the penultimate L-valine residue, forming a five-membered lactam ring. Its activity requires the presence of the MftB chaperone. The polypeptide is Mycofactocin maturase MftC (Mycobacterium ulcerans (strain Agy99)).